The sequence spans 838 residues: pre-rRNA 2'-O-ribose RNA methyltransferase FTSJ3 (838 aa).

Positions 56, 58, 76, 92, and 117 each coordinate S-adenosyl-L-methionine. The active-site Proton acceptor is Lys-157. The interval 332 to 367 is disordered; it reads ISLSSEEEEEGDEEEAVAETKQAPEEEEEREEEQLN. 3 positions are modified to phosphoserine: Ser-333, Ser-335, and Ser-336. Residues 336-348 show a composition bias toward acidic residues; the sequence is SEEEEEGDEEEAV. At Arg-390 the chain carries Citrulline. Residues 453–482 form a disordered region; it reads IYVSDAEDDDDTSLESDLDPEELAGVRTHS. Over residues 457 to 474 the composition is skewed to acidic residues; sequence DAEDDDDTSLESDLDPEE. 2 positions are modified to phosphoserine: Ser-532 and Ser-545. The interval 537-639 is disordered; sequence DADEALEISQ…GRGSKADEDG (103 aa). Lys-571 is covalently cross-linked (Glycyl lysine isopeptide (Lys-Gly) (interchain with G-Cter in SUMO2)). Ser-576 carries the phosphoserine modification. Residues Lys-634 and Lys-650 each participate in a glycyl lysine isopeptide (Lys-Gly) (interchain with G-Cter in SUMO2) cross-link. Position 667 is a phosphoserine (Ser-667). Lys-669 participates in a covalent cross-link: Glycyl lysine isopeptide (Lys-Gly) (interchain with G-Cter in SUMO2). Ser-679 is subject to Phosphoserine. A Glycyl lysine isopeptide (Lys-Gly) (interchain with G-Cter in SUMO2) cross-link involves residue Lys-701. Residues 730-768 adopt a coiled-coil conformation; sequence IKKVAEAKARKKRRVLKKLEQTKKKAEAVVNTVDISERE. Arg-774 bears the Citrulline mark. The segment covering 802-812 has biased composition (basic residues); the sequence is VRRPAGVKGHF. The disordered stretch occupies residues 802 to 838; it reads VRRPAGVKGHFKVVDSRMKKDQRAQQRKEQKKKHKRK. The segment covering 813–829 has biased composition (basic and acidic residues); sequence KVVDSRMKKDQRAQQRK.

The protein belongs to the class I-like SAM-binding methyltransferase superfamily. RNA methyltransferase RlmE family. SPB1 subfamily. Interacts with NIP7. In terms of processing, citrullinated by PADI4.

It localises to the nucleus. Its subcellular location is the nucleolus. It catalyses the reaction a ribonucleotide in rRNA + S-adenosyl-L-methionine = a 2'-O-methylribonucleotide in rRNA + S-adenosyl-L-homocysteine + H(+). Functionally, RNA 2'-O-methyltransferase involved in the processing of the 34S pre-rRNA to 18S rRNA and in 40S ribosomal subunit formation. In Mus musculus (Mouse), this protein is pre-rRNA 2'-O-ribose RNA methyltransferase FTSJ3 (Ftsj3).